Consider the following 530-residue polypeptide: UPF0422 protein lpp3030 (530 aa).

Residues 1 to 19 (MKFKKIILALACLSSPLYA) form the signal peptide. The stretch at 20-66 (DQDQQLKSEIQRLQHQAEDLQAQLNRLQKQLANHKSSQQKHEQQAAA) forms a coiled coil. The interval 50–81 (LANHKSSQQKHEQQAAAKPAEPKSKPTTKSGA) is disordered. Residues 63–79 (QAAAKPAEPKSKPTTKS) are compositionally biased toward low complexity.

It belongs to the UPF0422 family.

The sequence is that of UPF0422 protein lpp3030 from Legionella pneumophila (strain Paris).